We begin with the raw amino-acid sequence, 439 residues long: DNA primase DnaG (439 aa).

One can recognise a Toprim domain in the interval 169-243 (DSIIVVEGRA…DIDYVARAPY (75 aa)). 3 residues coordinate Mg(2+): glutamate 175, aspartate 217, and aspartate 219.

It belongs to the archaeal DnaG primase family. In terms of assembly, forms a ternary complex with MCM helicase and DNA. Requires Mg(2+) as cofactor.

It catalyses the reaction ssDNA + n NTP = ssDNA/pppN(pN)n-1 hybrid + (n-1) diphosphate.. Functionally, RNA polymerase that catalyzes the synthesis of short RNA molecules used as primers for DNA polymerase during DNA replication. This chain is DNA primase DnaG, found in Methanococcus maripaludis (strain C7 / ATCC BAA-1331).